Consider the following 309-residue polypeptide: Glutaminase (309 aa).

Residues serine 64, asparagine 114, glutamate 160, asparagine 167, tyrosine 191, tyrosine 243, and valine 261 each contribute to the substrate site.

It belongs to the glutaminase family. Homotetramer.

It carries out the reaction L-glutamine + H2O = L-glutamate + NH4(+). This is Glutaminase from Agrobacterium fabrum (strain C58 / ATCC 33970) (Agrobacterium tumefaciens (strain C58)).